The following is a 1052-amino-acid chain: Suppressor of RPS4-RLD 1 (1052 aa).

The residue at position 2 (alanine 2) is an N-acetylalanine. 2 TPR repeats span residues 39–72 (ILDI…EPFA) and 74–106 (QAFI…ALQQ). The stretch at 107–136 (TADVKQLLELEELLKDARREIDGILKSHAT) forms a coiled coil. A disordered region spans residues 131-181 (LKSHATESPQETPAYHSEKSDEKSDKLDNHESGASSNGNSHESSSELGEQS). Residues 146–161 (HSEKSDEKSDKLDNHE) are compositionally biased toward basic and acidic residues. The span at 162–181 (SGASSNGNSHESSSELGEQS) shows a compositional bias: low complexity. TPR repeat units follow at residues 297-330 (VDFR…EPTY), 331-364 (PEAL…NPAA), 365-398 (SEAW…EPNS), 400-432 (DVLH…EKDN), 433-466 (KSAY…DSNY), 468-500 (EAWL…DNRV), 502-534 (KAYH…ENTI), 535-567 (ECLY…ELDA), and 569-591 (EKFV…ASKV). The interval 704-739 (STKGTTKNGKKNRRRERTNILSQNRGGAGCSSSSFS) is disordered. Residues 966–986 (GTAVTGFVVLLGLLLAANMEF) traverse the membrane as a helical segment.

In terms of assembly, multimer. Interacts with EDS1. Interacts with SNC1 and RPS4. Interacts (via TPR domain) with SGT1 (via TPR domain). Interacts with the TCP transcription factors TCP8, TCP14, TCP15, TCP20, TCP22 and TCP23. In terms of tissue distribution, ubiquitous. Not detected in very young flowers and older siliques.

Its subcellular location is the nucleus. It localises to the cytoplasm. The protein resides in the perinuclear region. The protein localises to the membrane. It is found in the microsome. Functionally, negative regulator of effector-triggered immunity associated with the EDS1 resistance pathway. May localize its interactors to a microsomal membrane. May therefore negatively regulate RPS4 and SNC1 translocation to the nucleus. Contributes to the regulation of RPS2 and RPS4 protein levels and negatively regulates SNC1 stability. The protein is Suppressor of RPS4-RLD 1 of Arabidopsis thaliana (Mouse-ear cress).